We begin with the raw amino-acid sequence, 439 residues long: Protease Do-like 1, chloroplastic (439 aa).

The tract at residues 154 to 323 (QGSGSGFVWD…IPVDTVGGIV (170 aa)) is serine protease. Catalysis depends on charge relay system residues His-173, Asp-203, and Ser-282. The PDZ domain maps to 326–423 (LVRFGKVTRP…EVTVEVLRGD (98 aa)).

This sequence belongs to the peptidase S1C family. Interacts with PTAC16 and other potential targets for degradation under high light conditions.

Its subcellular location is the plastid. It is found in the chloroplast thylakoid membrane. With respect to regulation, inhibited by phenylmethylsulfonyl fluoride and O-phenanthroline. Functionally, serine protease that is required at high temperature. May be involved in the degradation of damaged proteins. In vivo, can degrade beta-casein. This Arabidopsis thaliana (Mouse-ear cress) protein is Protease Do-like 1, chloroplastic (DEGP1).